Reading from the N-terminus, the 242-residue chain is Prosalusin (242 aa).

Positions 1-26 (MAAATRSCRPWGSLLGLIWLVSAAAA) are cleaved as a signal peptide. The propeptide occupies 27–189 (SWDLSSLRCN…SSWVVYGTNY (163 aa)). Residue 93-100 (GWTGTGKS) participates in ATP binding. Residue asparagine 149 is glycosylated (N-linked (GlcNAc...) asparagine).

This sequence belongs to the ClpA/ClpB family. Torsin subfamily.

It localises to the secreted. Functionally, salusin may be a endocrine and/or paracrine factor able to increase intracellular calcium concentrations and induce cell mitogenesis. Salusin may also be a potent hypotensive peptide. The protein is Prosalusin (TOR2A) of Bos taurus (Bovine).